Consider the following 515-residue polypeptide: ADP,ATP carrier protein 1 (515 aa).

12 consecutive transmembrane segments (helical) span residues 24–44 (LKKV…YTVL), 62–82 (AIPF…MLIY), 93–113 (ALFY…PTVI), 124–144 (EFAD…VAIL), 149–169 (FAAF…LMFW), 184–204 (FYAL…RAIV), 226–246 (LLMA…WWIN), 286–306 (YILL…LIEV), 329–349 (FSFW…GNVI), 358–378 (ALVT…LVIF), 383–403 (SGLV…VGAI), and 465–485 (IGAM…IWLV).

It belongs to the ADP/ATP translocase tlc family.

Its subcellular location is the cell membrane. The chain is ADP,ATP carrier protein 1 (tlcA) from Chlamydia pneumoniae (Chlamydophila pneumoniae).